The primary structure comprises 199 residues: Probable GTP-binding protein EngB (199 aa).

In terms of domain architecture, EngB-type G spans 22–196 (NFSEVAFLGR…EDVIINQTLG (175 aa)). Residues 30-37 (GRSNVGKS), 57-61 (GKTQL), 82-85 (DLPG), 152-155 (TKCD), and 175-177 (VSN) each bind GTP. Positions 37 and 59 each coordinate Mg(2+).

Belongs to the TRAFAC class TrmE-Era-EngA-EngB-Septin-like GTPase superfamily. EngB GTPase family. Mg(2+) is required as a cofactor.

Its function is as follows. Necessary for normal cell division and for the maintenance of normal septation. The chain is Probable GTP-binding protein EngB from Campylobacter jejuni subsp. doylei (strain ATCC BAA-1458 / RM4099 / 269.97).